Reading from the N-terminus, the 365-residue chain is 3-dehydroquinate synthase (365 aa).

NAD(+) contacts are provided by residues 72–77, 130–131, lysine 142, and lysine 151; these read SGEKEK and TT. Zn(2+) is bound by residues glutamate 184, histidine 247, and histidine 264.

It belongs to the sugar phosphate cyclases superfamily. Dehydroquinate synthase family. Co(2+) is required as a cofactor. Requires Zn(2+) as cofactor. NAD(+) serves as cofactor.

The protein localises to the cytoplasm. It catalyses the reaction 7-phospho-2-dehydro-3-deoxy-D-arabino-heptonate = 3-dehydroquinate + phosphate. Its pathway is metabolic intermediate biosynthesis; chorismate biosynthesis; chorismate from D-erythrose 4-phosphate and phosphoenolpyruvate: step 2/7. Functionally, catalyzes the conversion of 3-deoxy-D-arabino-heptulosonate 7-phosphate (DAHP) to dehydroquinate (DHQ). In Bacillus cereus (strain AH187), this protein is 3-dehydroquinate synthase.